Here is a 613-residue protein sequence, read N- to C-terminus: Laccase 1 (613 aa).

An N-terminal signal peptide occupies residues 1–20; the sequence is MSSSVRLLLIVALLYTNSWA. 3 consecutive Plastocyanin-like domains span residues 29-142, 171-359, and 468-598; these read ITWE…IRPK, YLVV…MRVP, and DATC…ILDG. Asparagine 74 carries an N-linked (GlcNAc...) asparagine glycan. 4 residues coordinate Cu cation: histidine 78, histidine 80, histidine 122, and histidine 124. N-linked (GlcNAc...) asparagine glycosylation is found at asparagine 256, asparagine 279, and asparagine 484. Cu cation contacts are provided by histidine 506, histidine 509, and histidine 511. Residue asparagine 526 is glycosylated (N-linked (GlcNAc...) asparagine). The Cu cation site is built by histidine 580, cysteine 581, histidine 582, and histidine 586.

This sequence belongs to the multicopper oxidase family. The cofactor is Cu cation.

It is found in the cell surface. Its pathway is pigment biosynthesis. Laccase; part of the Pks1 gene cluster that mediates the biosynthesis of an anthraquinone derivative pigment that contributes to conidial pigmentation that provides protection from UV radiation, heat and cold stress. The polyketide synthase Pks1 produces 1-acetyl-2,4,6,8-tetrahydroxy-9,10-anthraquinone though condensation of acetyl-CoA with malonyl-CoA. The dehydratase EthD and the laccase Mlac1 further convert the anthraquinone derivative into the final conidial pigment. The sequence is that of Laccase 1 from Metarhizium acridum (strain CQMa 102).